A 224-amino-acid polypeptide reads, in one-letter code: Glutathione S-transferase U28 (224 aa).

The GST N-terminal domain maps to 6–85; it reads SKVVVLDFWA…YIDETWTDAA (80 aa). Glutathione is bound by residues 16–17, 42–43, 56–57, and 69–70; these read SP, NK, KV, and ES. In terms of domain architecture, GST C-terminal spans 91–217; sequence DPQSRATARF…EKVYQQVLKL (127 aa). T154 carries the phosphothreonine modification.

It belongs to the GST superfamily. Tau family.

It is found in the cytoplasm. Its subcellular location is the cytosol. The catalysed reaction is RX + glutathione = an S-substituted glutathione + a halide anion + H(+). Functionally, may be involved in the conjugation of reduced glutathione to a wide number of exogenous and endogenous hydrophobic electrophiles and have a detoxification role against certain herbicides. In Arabidopsis thaliana (Mouse-ear cress), this protein is Glutathione S-transferase U28 (GSTU28).